The primary structure comprises 347 residues: Uroporphyrinogen decarboxylase (347 aa).

Substrate is bound by residues 24–28 (RQAGR), aspartate 74, tyrosine 145, serine 200, and histidine 315.

The protein belongs to the uroporphyrinogen decarboxylase family. Homodimer.

The protein resides in the cytoplasm. The catalysed reaction is uroporphyrinogen III + 4 H(+) = coproporphyrinogen III + 4 CO2. Its pathway is porphyrin-containing compound metabolism; protoporphyrin-IX biosynthesis; coproporphyrinogen-III from 5-aminolevulinate: step 4/4. In terms of biological role, catalyzes the decarboxylation of four acetate groups of uroporphyrinogen-III to yield coproporphyrinogen-III. This Hydrogenobaculum sp. (strain Y04AAS1) protein is Uroporphyrinogen decarboxylase.